Here is a 1820-residue protein sequence, read N- to C-terminus: uncharacterized protein (1820 aa).

Disordered regions lie at residues 1-73 (MQWT…TLSG), 86-158 (TTTT…VRSA), 226-260 (GSSGPSSLVNSPALGRRKRYTSNSSNCSSQFNNNY), 286-366 (EERA…QETE), 453-497 (DVQD…RNLS), 519-548 (LSSISNKAPGGVPTESGVVTRPDSSDTDTA), 577-597 (GNSSTTTTTTSELGVPRPPTP), 619-689 (GAGT…TASG), and 735-830 (HSHN…TPSS). Residues 20-31 (NRNSIEQRTPAN) are compositionally biased toward polar residues. Over residues 86-128 (TTTTTIIESSSSTNTTLEKNSPSPAGGSCSSGSGSLSPAYLQH) the composition is skewed to low complexity. The segment covering 129 to 146 (HLQHHGSPLHHLQVHHHT) has biased composition (basic residues). The span at 247-259 (SNSSNCSSQFNNN) shows a compositional bias: low complexity. Residues 265–308 (VDSLDDMLRKLTELEQRVIEAEERAEEAEDKVRAMEQRLSEWPK) are a coiled coil. Over residues 294–305 (DKVRAMEQRLSE) the composition is skewed to basic and acidic residues. Over residues 346 to 358 (ASGGATAGAAGSG) the composition is skewed to low complexity. A coiled-coil region spans residues 362-438 (TQETEKTITS…LKNHIANQSQ (77 aa)). The span at 453–463 (DVQDFTGSGSN) shows a compositional bias: polar residues. Phosphoserine occurs at positions 542 and 543. Residues 623–632 (GTSTAESTAS) show a composition bias toward low complexity. Gly residues predominate over residues 655 to 669 (HGSGTGIGTGDGHGT). The segment covering 738-769 (NSSSTDNTETSTSGSASSPSKSLKTSSSLSPA) has biased composition (low complexity). Residues 787–818 (QSRTSTTPSSRINQHLQPSQHQHHTLSNQNHG) are compositionally biased toward polar residues. PH domains follow at residues 909–1003 (SLEK…NVQR) and 1017–1124 (KPTV…VVSG). Phosphoserine occurs at positions 1073, 1075, and 1077. The region spanning 1159–1378 (HTKDTITAPL…PSRMEVLSIL (220 aa)) is the MyTH4 domain. The FERM domain occupies 1389–1712 (HAIPVHMMNS…DYMNALGHTV (324 aa)). Disordered regions lie at residues 1713 to 1748 (PGTPQMNSLTRNGSHRSLRTSQRPNLGGGSAVATGF) and 1764 to 1820 (ATHT…QRIK). Over residues 1714–1724 (GTPQMNSLTRN) the composition is skewed to polar residues. A compositionally biased stretch (low complexity) spans 1764–1781 (ATHTLNSNHSHTLSSSHH). Residues 1805–1820 (HQPDILKSTPDHQRIK) show a composition bias toward basic and acidic residues.

This is an uncharacterized protein from Drosophila melanogaster (Fruit fly).